Consider the following 159-residue polypeptide: 2-C-methyl-D-erythritol 2,4-cyclodiphosphate synthase (159 aa).

The a divalent metal cation site is built by Asp-8 and His-10. 4-CDP-2-C-methyl-D-erythritol 2-phosphate is bound by residues 8 to 10 (DVH) and 34 to 35 (HS). His-42 provides a ligand contact to a divalent metal cation. Residues 56–58 (DIG), 61–65 (FPDTD), 132–135 (TTTE), Phe-139, and Arg-142 each bind 4-CDP-2-C-methyl-D-erythritol 2-phosphate.

The protein belongs to the IspF family. Homotrimer. A divalent metal cation serves as cofactor.

It carries out the reaction 4-CDP-2-C-methyl-D-erythritol 2-phosphate = 2-C-methyl-D-erythritol 2,4-cyclic diphosphate + CMP. The protein operates within isoprenoid biosynthesis; isopentenyl diphosphate biosynthesis via DXP pathway; isopentenyl diphosphate from 1-deoxy-D-xylulose 5-phosphate: step 4/6. Its function is as follows. Involved in the biosynthesis of isopentenyl diphosphate (IPP) and dimethylallyl diphosphate (DMAPP), two major building blocks of isoprenoid compounds. Catalyzes the conversion of 4-diphosphocytidyl-2-C-methyl-D-erythritol 2-phosphate (CDP-ME2P) to 2-C-methyl-D-erythritol 2,4-cyclodiphosphate (ME-CPP) with a corresponding release of cytidine 5-monophosphate (CMP). This Finegoldia magna (strain ATCC 29328 / DSM 20472 / WAL 2508) (Peptostreptococcus magnus) protein is 2-C-methyl-D-erythritol 2,4-cyclodiphosphate synthase.